The sequence spans 547 residues: G protein-coupled receptor associated sorting protein 3 (547 aa).

Composition is skewed to basic residues over residues 1-10 (MTGTKNKTRA) and 38-48 (AKTRAKAKAKT). A disordered region spans residues 1 to 53 (MTGTKNKTRAQAKTEKKPVTQAKAGAEREATGVVRPVAKTRAKAKAKTGSKTD).

It belongs to the GPRASP family. Homodimer.

It localises to the cytoplasm. The protein localises to the nucleus. In terms of biological role, survival and differentiation promoting protein that plays a role in the regulation of neurosynaptogenesis. Induces phosphatase PP2A activity which results in APP dephosphorylation and inhibits BACE1-mediated processing of APP. This Macaca fascicularis (Crab-eating macaque) protein is G protein-coupled receptor associated sorting protein 3 (GPRASP3).